Here is a 307-residue protein sequence, read N- to C-terminus: 2-phospho-L-lactate transferase (307 aa).

Residues aspartate 48 and lysine 87 each coordinate 7,8-didemethyl-8-hydroxy-5-deazariboflavin.

The protein belongs to the CofD family. As to quaternary structure, homodimer. The cofactor is Mg(2+).

The catalysed reaction is (2S)-lactyl-2-diphospho-5'-guanosine + 7,8-didemethyl-8-hydroxy-5-deazariboflavin = oxidized coenzyme F420-0 + GMP + H(+). The protein operates within cofactor biosynthesis; coenzyme F420 biosynthesis. Catalyzes the transfer of the 2-phospholactate moiety from (2S)-lactyl-2-diphospho-5'-guanosine to 7,8-didemethyl-8-hydroxy-5-deazariboflavin (FO) with the formation of oxidized coenzyme F420-0 and GMP. This chain is 2-phospho-L-lactate transferase, found in Methanosarcina acetivorans (strain ATCC 35395 / DSM 2834 / JCM 12185 / C2A).